A 66-amino-acid polypeptide reads, in one-letter code: Beta-toxin Chui2 (66 aa).

The LCN-type CS-alpha/beta domain occupies 1-66 (KEGYIVNSYT…VWPLKNKTCN (66 aa)). 4 cysteine pairs are disulfide-bonded: cysteine 12–cysteine 65, cysteine 16–cysteine 41, cysteine 25–cysteine 46, and cysteine 29–cysteine 48. Asparagine 66 bears the Asparagine amide mark.

The protein belongs to the long (4 C-C) scorpion toxin superfamily. Sodium channel inhibitor family. Beta subfamily. Expressed by the venom gland.

Its subcellular location is the secreted. Functionally, beta toxins bind voltage-independently at site-4 of sodium channels (Nav) and shift the voltage of activation toward more negative potentials thereby affecting sodium channel activation and promoting spontaneous and repetitive firing. The protein is Beta-toxin Chui2 of Centruroides huichol (Scorpion).